The chain runs to 605 residues: Apoptosis-inducing factor 3 (605 aa).

Residues 18 to 29 (VLPEKERGKEEL) are compositionally biased toward basic and acidic residues. The disordered stretch occupies residues 18–44 (VLPEKERGKEELSASGKGSPRGYQGNG). Residues 70–165 (ATVCHVKDLE…VKIEKEKVTI (96 aa)) form the Rieske domain. Positions 109, 111, 128, and 131 each coordinate [2Fe-2S] cluster. FAD is bound by residues 201-205 (GAGAA), Arg235, Lys240, Val270, Asp467, and Trp514.

The protein belongs to the FAD-dependent oxidoreductase family.

The protein resides in the mitochondrion. Functionally, induces apoptosis through a caspase dependent pathway. Reduces mitochondrial membrane potential. The polypeptide is Apoptosis-inducing factor 3 (Aifm3) (Mus musculus (Mouse)).